A 284-amino-acid polypeptide reads, in one-letter code: ATP phosphoribosyltransferase (284 aa).

It belongs to the ATP phosphoribosyltransferase family. Long subfamily. It depends on Mg(2+) as a cofactor.

Its subcellular location is the cytoplasm. It catalyses the reaction 1-(5-phospho-beta-D-ribosyl)-ATP + diphosphate = 5-phospho-alpha-D-ribose 1-diphosphate + ATP. It participates in amino-acid biosynthesis; L-histidine biosynthesis; L-histidine from 5-phospho-alpha-D-ribose 1-diphosphate: step 1/9. With respect to regulation, feedback inhibited by histidine. Functionally, catalyzes the condensation of ATP and 5-phosphoribose 1-diphosphate to form N'-(5'-phosphoribosyl)-ATP (PR-ATP). Has a crucial role in the pathway because the rate of histidine biosynthesis seems to be controlled primarily by regulation of HisG enzymatic activity. This is ATP phosphoribosyltransferase from Pseudarthrobacter chlorophenolicus (strain ATCC 700700 / DSM 12829 / CIP 107037 / JCM 12360 / KCTC 9906 / NCIMB 13794 / A6) (Arthrobacter chlorophenolicus).